Reading from the N-terminus, the 78-residue chain is Delta-conotoxin TxVIA (78 aa).

The N-terminal stretch at 1–22 (MKLTCMMIVAVLFLTAWTFATA) is a signal peptide. Residues 23–49 (DDSGNGLENLFSNAHHQMKNPEASKLN) constitute a propeptide that is removed on maturation. 3 disulfide bridges follow: Cys-53-Cys-68, Cys-60-Cys-72, and Cys-67-Cys-77. Met-59 carries the post-translational modification Methionine sulfoxide; partial.

Belongs to the conotoxin O1 superfamily. As to expression, expressed by the venom duct. Is present in all duct parts with a highest content in part 4 (distal part near the pharynx).

It localises to the secreted. In terms of biological role, delta-conotoxins bind to site 6 of voltage-gated sodium channels (Nav) and inhibit the inactivation process. Binding of this toxin is strongly calcium-dependent but not voltage-dependent. The binding site is most likely on the extracellular side of the sodium channel. Binds receptor sites on both mollusk and rat central nervous system, but despite its high affinity binding to rat sodium channel, it has no functional effect in vivo and in vitro on it. Also has no effect on Gambusia fish. Is important in mollusk for the paralysis of the prey. Upon injection of the peptide, a subordinate lobster assumes an exaggerated dominant posture (of a 'King-Kong' lobster!). This is Delta-conotoxin TxVIA from Conus textile (Cloth-of-gold cone).